Consider the following 537-residue polypeptide: Glutamyl-tRNA reductase, chloroplastic (537 aa).

The N-terminal 48 residues, Met1–Arg48, are a transit peptide targeting the chloroplast. Substrate-binding positions include Thr134–Arg137, Ser194, Glu199–Gln201, and Gln205. Cys135 acts as the Nucleophile in catalysis. Gly276–Gly281 is a binding site for NADP(+).

Belongs to the glutamyl-tRNA reductase family.

It localises to the plastid. It is found in the chloroplast. It carries out the reaction (S)-4-amino-5-oxopentanoate + tRNA(Glu) + NADP(+) = L-glutamyl-tRNA(Glu) + NADPH + H(+). The protein operates within porphyrin-containing compound metabolism; protoporphyrin-IX biosynthesis; 5-aminolevulinate from L-glutamyl-tRNA(Glu): step 1/2. Functionally, catalyzes the NADPH-dependent reduction of glutamyl-tRNA(Glu) to glutamate 1-semialdehyde (GSA). In Oryza sativa subsp. indica (Rice), this protein is Glutamyl-tRNA reductase, chloroplastic.